The following is a 331-amino-acid chain: Ketol-acid reductoisomerase (NADP(+)) (331 aa).

The 180-residue stretch at 2–181 (TKVYYEDAVK…GATRAGVIET (180 aa)) folds into the KARI N-terminal Rossmann domain. Residues 25-28 (YGSQ), arginine 48, serine 52, and 82-85 (DETQ) contribute to the NADP(+) site. Histidine 107 is an active-site residue. Glycine 133 is a binding site for NADP(+). Residues 182–327 (TFKEETETDL…AELREMMPFV (146 aa)) form the KARI C-terminal knotted domain. Mg(2+) is bound by residues aspartate 190, glutamate 194, glutamate 226, and glutamate 230. Serine 251 lines the substrate pocket.

It belongs to the ketol-acid reductoisomerase family. Mg(2+) serves as cofactor.

It carries out the reaction (2R)-2,3-dihydroxy-3-methylbutanoate + NADP(+) = (2S)-2-acetolactate + NADPH + H(+). The catalysed reaction is (2R,3R)-2,3-dihydroxy-3-methylpentanoate + NADP(+) = (S)-2-ethyl-2-hydroxy-3-oxobutanoate + NADPH + H(+). Its pathway is amino-acid biosynthesis; L-isoleucine biosynthesis; L-isoleucine from 2-oxobutanoate: step 2/4. It functions in the pathway amino-acid biosynthesis; L-valine biosynthesis; L-valine from pyruvate: step 2/4. Its function is as follows. Involved in the biosynthesis of branched-chain amino acids (BCAA). Catalyzes an alkyl-migration followed by a ketol-acid reduction of (S)-2-acetolactate (S2AL) to yield (R)-2,3-dihydroxy-isovalerate. In the isomerase reaction, S2AL is rearranged via a Mg-dependent methyl migration to produce 3-hydroxy-3-methyl-2-ketobutyrate (HMKB). In the reductase reaction, this 2-ketoacid undergoes a metal-dependent reduction by NADPH to yield (R)-2,3-dihydroxy-isovalerate. This chain is Ketol-acid reductoisomerase (NADP(+)), found in Listeria monocytogenes serovar 1/2a (strain ATCC BAA-679 / EGD-e).